A 229-amino-acid polypeptide reads, in one-letter code: Probable queuosine precursor transporter (229 aa).

7 helical membrane passes run Phe6–Gly26, Met28–Thr48, Val49–Ala69, Val86–Phe106, Leu118–Phe138, Leu160–Val182, and Val192–Tyr214.

It belongs to the vitamin uptake transporter (VUT/ECF) (TC 2.A.88) family. Q precursor transporter subfamily.

Its subcellular location is the cell membrane. Its function is as follows. Involved in the import of queuosine (Q) precursors, required for Q precursor salvage. The protein is Probable queuosine precursor transporter (ypdP) of Bacillus subtilis (strain 168).